The following is a 243-amino-acid chain: Probable ubiquitin-conjugating enzyme E2 33 (243 aa).

The UBC core domain occupies 5 to 162; the sequence is ACIKRLQKEY…FPEYVEKYSQ (158 aa). The active-site Glycyl thioester intermediate is Cys87. The segment at 168-197 is disordered; sequence EEAATQQTTTSENQDFPQKDNAKVESEKSV. The segment covering 184–197 has biased composition (basic and acidic residues); the sequence is PQKDNAKVESEKSV. Residues 220–240 form a helical membrane-spanning segment; that stretch reads LPGWIVLLLVSIVGVVMALPL.

This sequence belongs to the ubiquitin-conjugating enzyme family.

It is found in the membrane. The enzyme catalyses S-ubiquitinyl-[E1 ubiquitin-activating enzyme]-L-cysteine + [E2 ubiquitin-conjugating enzyme]-L-cysteine = [E1 ubiquitin-activating enzyme]-L-cysteine + S-ubiquitinyl-[E2 ubiquitin-conjugating enzyme]-L-cysteine.. The protein operates within protein modification; protein ubiquitination. Its function is as follows. Accepts the ubiquitin from the E1 complex and catalyzes its covalent attachment to other proteins. This is Probable ubiquitin-conjugating enzyme E2 33 (UBC33) from Arabidopsis thaliana (Mouse-ear cress).